A 264-amino-acid polypeptide reads, in one-letter code: Apolipoprotein A-I (264 aa).

An N-terminal signal peptide occupies residues 1–18 (MKTVVLAVAVLFLTGSQA). Repeat copies occupy residues 67–88 (LNLL…EQLG) and 89–110 (PVTQ…REMN). The interval 67–264 (LNLLENWDTL…EEASKKLNAQ (198 aa)) is 10 X approximate tandem repeats. At methionine 109 the chain carries Methionine sulfoxide. Residues 111–121 (KDLEEVKAKVQ) form a 3; half-length repeat. 5 repeat units span residues 122-143 (PYLD…QKME), 144-165 (PLGA…EKLT), 166-187 (PLGE…TKMT), 188-207 (PYSD…LKDS), and 208-229 (PTLA…EKAK). The residue at position 193 (methionine 193) is a Methionine sulfoxide. The 9; half-length repeat unit spans residues 230-240 (PALEDLRQGLM). Methionine 240 carries the methionine sulfoxide modification. The stretch at 241 to 264 (PVFESFKTRIMSMVEEASKKLNAQ) is repeat 10.

This sequence belongs to the apolipoprotein A1/A4/E family. In terms of assembly, homodimer. Interacts with APOA1BP and CLU. Component of a sperm activating protein complex (SPAP), consisting of APOA1, an immunoglobulin heavy chain, an immunoglobulin light chain and albumin. Interacts with NDRG1. Interacts with SCGB3A2. Interacts with NAXE and YJEFN3. Post-translationally, glycosylated. In terms of processing, palmitoylated. Phosphorylation sites are present in the extracellular medium. In terms of tissue distribution, major protein of plasma HDL, also found in chylomicrons.

It localises to the secreted. In terms of biological role, participates in the reverse transport of cholesterol from tissues to the liver for excretion by promoting cholesterol efflux from tissues and by acting as a cofactor for the lecithin cholesterol acyltransferase (LCAT). As part of the SPAP complex, activates spermatozoa motility. The sequence is that of Apolipoprotein A-I (APOAI) from Mesocricetus auratus (Golden hamster).